The primary structure comprises 531 residues: Apolipoprotein N-acyltransferase (531 aa).

Transmembrane regions (helical) follow at residues 8–28 (IILL…LLAV), 34–54 (FGIF…IDGV), 69–89 (PAAI…WWLG), 105–125 (LAVV…VVIA), 136–156 (IAAL…VFTG), 178–198 (VVNL…PALI), and 207–227 (GLAI…YRLA). Positions 243 to 493 (VQPVIDQAKK…RGVLDTILPG (251 aa)) constitute a CN hydrolase domain. The active-site Proton acceptor is Glu-287. Residue Lys-351 is part of the active site. The active-site Nucleophile is the Cys-405. Residues 507 to 527 (IFWLSMAILSIVASFSRFGFN) form a helical membrane-spanning segment.

The protein belongs to the CN hydrolase family. Apolipoprotein N-acyltransferase subfamily.

Its subcellular location is the cell inner membrane. It catalyses the reaction N-terminal S-1,2-diacyl-sn-glyceryl-L-cysteinyl-[lipoprotein] + a glycerophospholipid = N-acyl-S-1,2-diacyl-sn-glyceryl-L-cysteinyl-[lipoprotein] + a 2-acyl-sn-glycero-3-phospholipid + H(+). It functions in the pathway protein modification; lipoprotein biosynthesis (N-acyl transfer). Catalyzes the phospholipid dependent N-acylation of the N-terminal cysteine of apolipoprotein, the last step in lipoprotein maturation. The sequence is that of Apolipoprotein N-acyltransferase from Sinorhizobium medicae (strain WSM419) (Ensifer medicae).